We begin with the raw amino-acid sequence, 313 residues long: Homoserine O-succinyltransferase (313 aa).

Cys142 (acyl-thioester intermediate) is an active-site residue. 2 residues coordinate substrate: Lys163 and Ser192. Catalysis depends on His235, which acts as the Proton acceptor. The active site involves Glu237. Arg249 lines the substrate pocket.

This sequence belongs to the MetA family.

The protein resides in the cytoplasm. The catalysed reaction is L-homoserine + succinyl-CoA = O-succinyl-L-homoserine + CoA. The protein operates within amino-acid biosynthesis; L-methionine biosynthesis via de novo pathway; O-succinyl-L-homoserine from L-homoserine: step 1/1. Transfers a succinyl group from succinyl-CoA to L-homoserine, forming succinyl-L-homoserine. This Vibrio atlanticus (strain LGP32) (Vibrio splendidus (strain Mel32)) protein is Homoserine O-succinyltransferase.